A 946-amino-acid chain; its full sequence is Glucoamylase 1 (946 aa).

Positions 1–20 are cleaved as a signal peptide; that stretch reads MKLLSKVFVTALGLTSIVNA. N-linked (GlcNAc...) asparagine glycosylation is found at Asn51, Asn68, Asn97, Asn187, Asn244, Asn373, Asn393, Asn406, and Asn437. Residues Asp462 and Glu465 contribute to the active site. Residue Asn505 is glycosylated (N-linked (GlcNAc...) asparagine). Residues 517-532 show a composition bias toward low complexity; sequence AATKTTTTTSSSTSTS. Residues 517–541 form a disordered region; it reads AATKTTTTTSSSTSTSIDGKNTLAP. Residue Asn570 is glycosylated (N-linked (GlcNAc...) asparagine). The Proton donor role is filled by Asp628. Residues Asn704, Asn772, Asn801, Asn895, and Asn912 are each glycosylated (N-linked (GlcNAc...) asparagine).

It belongs to the glycosyl hydrolase 31 family. Post-translationally, the N-terminus is blocked.

It localises to the secreted. The protein localises to the cell wall. It is found in the membrane. It carries out the reaction Hydrolysis of terminal (1-&gt;4)-linked alpha-D-glucose residues successively from non-reducing ends of the chains with release of beta-D-glucose.. The sequence is that of Glucoamylase 1 (GAM1) from Candida albicans (strain SC5314 / ATCC MYA-2876) (Yeast).